The sequence spans 89 residues: Mu-theraphotoxin-Phlo1a (89 aa).

A signal peptide spans 1-22 (MKVSVLITLAVLGVMFVWTSAA). The propeptide occupies 23 to 52 (EQEDHGSDRRDSPALLKNLLGEEVFQSEER). Cystine bridges form between Cys54/Cys68, Cys61/Cys73, and Cys67/Cys81. Residue Ile87 is modified to Isoleucine amide.

The protein belongs to the neurotoxin 10 (Hwtx-1) family. 39 (Jztx-34) subfamily. As to expression, expressed by the venom gland.

The protein resides in the secreted. In terms of biological role, gating-modifier toxin that inhibits voltage-gated sodium channel Nav by shifting the threshold for channel activation to more positive potentials. This toxin moderately inhibits human Nav1.7/SCN9A (IC(50)=459 nM) and weakly inhibits hNav1.2/SCN2A and hNav1.5/SCN5A (&lt;20% inhibition at 1 uM peptide). Inhibition of Nav1.7 is voltage-dependent, with lower inhibition at more positive test pulses. The chain is Mu-theraphotoxin-Phlo1a from Phlogius sp. (Tarantula spider).